We begin with the raw amino-acid sequence, 334 residues long: Probable fructose-bisphosphate aldolase class 1 (334 aa).

Belongs to the class I fructose-bisphosphate aldolase family.

The enzyme catalyses beta-D-fructose 1,6-bisphosphate = D-glyceraldehyde 3-phosphate + dihydroxyacetone phosphate. Its pathway is carbohydrate degradation; glycolysis; D-glyceraldehyde 3-phosphate and glycerone phosphate from D-glucose: step 4/4. The sequence is that of Probable fructose-bisphosphate aldolase class 1 from Xylella fastidiosa (strain Temecula1 / ATCC 700964).